The following is a 484-amino-acid chain: tRNA sulfurtransferase (484 aa).

The 105-residue stretch at 63-167 (EAFADRLSCI…RENLYLVVNR (105 aa)) folds into the THUMP domain. Residues 185–186 (LI), lysine 267, glycine 289, and glutamine 298 contribute to the ATP site. A disulfide bridge links cysteine 346 with cysteine 458. Residues 406–484 (VNSNEVIIDV…GYENVKVYRP (79 aa)) enclose the Rhodanese domain. Cysteine 458 functions as the Cysteine persulfide intermediate in the catalytic mechanism.

It belongs to the ThiI family.

It is found in the cytoplasm. The enzyme catalyses [ThiI sulfur-carrier protein]-S-sulfanyl-L-cysteine + a uridine in tRNA + 2 reduced [2Fe-2S]-[ferredoxin] + ATP + H(+) = [ThiI sulfur-carrier protein]-L-cysteine + a 4-thiouridine in tRNA + 2 oxidized [2Fe-2S]-[ferredoxin] + AMP + diphosphate. The catalysed reaction is [ThiS sulfur-carrier protein]-C-terminal Gly-Gly-AMP + S-sulfanyl-L-cysteinyl-[cysteine desulfurase] + AH2 = [ThiS sulfur-carrier protein]-C-terminal-Gly-aminoethanethioate + L-cysteinyl-[cysteine desulfurase] + A + AMP + 2 H(+). It functions in the pathway cofactor biosynthesis; thiamine diphosphate biosynthesis. Functionally, catalyzes the ATP-dependent transfer of a sulfur to tRNA to produce 4-thiouridine in position 8 of tRNAs, which functions as a near-UV photosensor. Also catalyzes the transfer of sulfur to the sulfur carrier protein ThiS, forming ThiS-thiocarboxylate. This is a step in the synthesis of thiazole, in the thiamine biosynthesis pathway. The sulfur is donated as persulfide by IscS. The protein is tRNA sulfurtransferase of Shewanella sediminis (strain HAW-EB3).